Reading from the N-terminus, the 202-residue chain is Small ribosomal subunit protein uS4 (202 aa).

Positions 23 to 42 (RKNARRAYAPGQHGQARKKR) are disordered. The 64-residue stretch at 90–153 (MRLDNTVFRL…RSQDLVKRNM (64 aa)) folds into the S4 RNA-binding domain.

Belongs to the universal ribosomal protein uS4 family. Part of the 30S ribosomal subunit. Contacts protein S5. The interaction surface between S4 and S5 is involved in control of translational fidelity.

Its function is as follows. One of the primary rRNA binding proteins, it binds directly to 16S rRNA where it nucleates assembly of the body of the 30S subunit. Functionally, with S5 and S12 plays an important role in translational accuracy. This chain is Small ribosomal subunit protein uS4, found in Microcystis aeruginosa (strain NIES-843 / IAM M-2473).